Consider the following 418-residue polypeptide: Mitochondrial distribution and morphology protein 10 (418 aa).

It belongs to the MDM10 family. In terms of assembly, component of the ER-mitochondria encounter structure (ERMES) or MDM complex, composed of MMM1, MDM10, MDM12 and MDM34. Associates with the mitochondrial outer membrane sorting assembly machinery SAM(core) complex.

It localises to the mitochondrion outer membrane. In terms of biological role, component of the ERMES/MDM complex, which serves as a molecular tether to connect the endoplasmic reticulum and mitochondria. Components of this complex are involved in the control of mitochondrial shape and protein biogenesis and may function in phospholipid exchange. MDM10 is involved in the late assembly steps of the general translocase of the mitochondrial outer membrane (TOM complex). Functions in the TOM40-specific route of the assembly of outer membrane beta-barrel proteins, including the association of TOM40 with the receptor TOM22 and small TOM proteins. Can associate with the SAM(core) complex as well as the MDM12-MMM1 complex, both involved in late steps of the major beta-barrel assembly pathway, that is responsible for biogenesis of all outer membrane beta-barrel proteins. May act as a switch that shuttles between both complexes and channels precursor proteins into the TOM40-specific pathway. Plays a role in mitochondrial morphology and in the inheritance of mitochondria. The protein is Mitochondrial distribution and morphology protein 10 of Meyerozyma guilliermondii (strain ATCC 6260 / CBS 566 / DSM 6381 / JCM 1539 / NBRC 10279 / NRRL Y-324) (Yeast).